The sequence spans 307 residues: Trehalose transport system permease protein SugA (307 aa).

6 helical membrane passes run 25–45 (LAFMLVAPAAMLMVAVTAYPI), 89–109 (LAITAVSVTIEFVLGLALALV), 123–143 (AVLIPYGIVTVVASYSWYYAW), 168–188 (LGIVVIAEVWKTTPFMSLLLL), 217–237 (ILPMIKPAIVVALLFRTLDAF), and 272–292 (LGSAISVLIFGCVAVIAFIFI). An ABC transmembrane type-1 domain is found at 85–291 (LAVTLAITAV…GCVAVIAFIF (207 aa)).

This sequence belongs to the binding-protein-dependent transport system permease family. The complex is composed of two ATP-binding proteins (SugC), two transmembrane proteins (Suga and SugB) and a solute-binding protein (LpqY).

Its subcellular location is the cell inner membrane. In terms of biological role, part of the ABC transporter complex LpqY-SugA-SugB-SugC, which is highly specific for uptake of trehalose. Involved in the recycling of extracellular trehalose released from trehalose-containing molecules synthesized by M.tuberculosis. Trehalose uptake is essential for virulence. Probably responsible for the translocation of the substrate across the membrane. This Mycobacterium tuberculosis (strain CDC 1551 / Oshkosh) protein is Trehalose transport system permease protein SugA (sugA).